Here is a 217-residue protein sequence, read N- to C-terminus: Probable transaldolase (217 aa).

The active-site Schiff-base intermediate with substrate is the K83.

This sequence belongs to the transaldolase family. Type 3B subfamily.

It is found in the cytoplasm. The enzyme catalyses D-sedoheptulose 7-phosphate + D-glyceraldehyde 3-phosphate = D-erythrose 4-phosphate + beta-D-fructose 6-phosphate. It functions in the pathway carbohydrate degradation; pentose phosphate pathway; D-glyceraldehyde 3-phosphate and beta-D-fructose 6-phosphate from D-ribose 5-phosphate and D-xylulose 5-phosphate (non-oxidative stage): step 2/3. Transaldolase is important for the balance of metabolites in the pentose-phosphate pathway. This chain is Probable transaldolase, found in Paracoccus denitrificans (strain Pd 1222).